Reading from the N-terminus, the 125-residue chain is uncharacterized protein (125 aa).

The tract at residues 1–21 (MLFYHCSSFSSSSSSSSSSAS) is disordered. Over residues 7–21 (SSFSSSSSSSSSSAS) the composition is skewed to low complexity.

This is an uncharacterized protein from Saccharomyces cerevisiae (strain ATCC 204508 / S288c) (Baker's yeast).